A 254-amino-acid polypeptide reads, in one-letter code: Large ribosomal subunit protein uL2 (254 aa).

Belongs to the universal ribosomal protein uL2 family.

This chain is Large ribosomal subunit protein uL2 (RPL2), found in Candida glabrata (strain ATCC 2001 / BCRC 20586 / JCM 3761 / NBRC 0622 / NRRL Y-65 / CBS 138) (Yeast).